Reading from the N-terminus, the 227-residue chain is Cytochrome c oxidase subunit 2 (227 aa).

At 1–14 (MAYPFQLGLQDATS) the chain is on the mitochondrial intermembrane side. A helical membrane pass occupies residues 15–45 (PIMEELMNFHDHTLMIVFLISSLVLYIISLM). Over 46–59 (LTTKLTHTSTMDAQ) the chain is Mitochondrial matrix. The chain crosses the membrane as a helical span at residues 60-87 (EVETIWTILPAAILILIALPSLRILYMM). Residues 88–227 (DEINNPALTV…YFENWSASMI (140 aa)) lie on the Mitochondrial intermembrane side of the membrane. Cu cation contacts are provided by His161, Cys196, Glu198, Cys200, His204, and Met207. Glu198 contacts Mg(2+). Position 218 is a phosphotyrosine (Tyr218).

The protein belongs to the cytochrome c oxidase subunit 2 family. Component of the cytochrome c oxidase (complex IV, CIV), a multisubunit enzyme composed of 14 subunits. The complex is composed of a catalytic core of 3 subunits MT-CO1, MT-CO2 and MT-CO3, encoded in the mitochondrial DNA, and 11 supernumerary subunits COX4I, COX5A, COX5B, COX6A, COX6B, COX6C, COX7A, COX7B, COX7C, COX8 and NDUFA4, which are encoded in the nuclear genome. The complex exists as a monomer or a dimer and forms supercomplexes (SCs) in the inner mitochondrial membrane with NADH-ubiquinone oxidoreductase (complex I, CI) and ubiquinol-cytochrome c oxidoreductase (cytochrome b-c1 complex, complex III, CIII), resulting in different assemblies (supercomplex SCI(1)III(2)IV(1) and megacomplex MCI(2)III(2)IV(2)). Found in a complex with TMEM177, COA6, COX18, COX20, SCO1 and SCO2. Interacts with TMEM177 in a COX20-dependent manner. Interacts with COX20. Interacts with COX16. The cofactor is Cu cation.

It localises to the mitochondrion inner membrane. The catalysed reaction is 4 Fe(II)-[cytochrome c] + O2 + 8 H(+)(in) = 4 Fe(III)-[cytochrome c] + 2 H2O + 4 H(+)(out). Functionally, component of the cytochrome c oxidase, the last enzyme in the mitochondrial electron transport chain which drives oxidative phosphorylation. The respiratory chain contains 3 multisubunit complexes succinate dehydrogenase (complex II, CII), ubiquinol-cytochrome c oxidoreductase (cytochrome b-c1 complex, complex III, CIII) and cytochrome c oxidase (complex IV, CIV), that cooperate to transfer electrons derived from NADH and succinate to molecular oxygen, creating an electrochemical gradient over the inner membrane that drives transmembrane transport and the ATP synthase. Cytochrome c oxidase is the component of the respiratory chain that catalyzes the reduction of oxygen to water. Electrons originating from reduced cytochrome c in the intermembrane space (IMS) are transferred via the dinuclear copper A center (CU(A)) of subunit 2 and heme A of subunit 1 to the active site in subunit 1, a binuclear center (BNC) formed by heme A3 and copper B (CU(B)). The BNC reduces molecular oxygen to 2 water molecules using 4 electrons from cytochrome c in the IMS and 4 protons from the mitochondrial matrix. The polypeptide is Cytochrome c oxidase subunit 2 (MT-CO2) (Lemniscomys barbarus (Barbary striped grass mouse)).